A 163-amino-acid chain; its full sequence is Ribosome maturation factor RimM (163 aa).

The PRC barrel domain maps to 92–161; that stretch reads PGEYYHHDLI…AETVTVNAAF (70 aa).

It belongs to the RimM family. Binds ribosomal protein uS19.

The protein resides in the cytoplasm. An accessory protein needed during the final step in the assembly of 30S ribosomal subunit, possibly for assembly of the head region. Essential for efficient processing of 16S rRNA. May be needed both before and after RbfA during the maturation of 16S rRNA. It has affinity for free ribosomal 30S subunits but not for 70S ribosomes. The polypeptide is Ribosome maturation factor RimM (Sphingopyxis alaskensis (strain DSM 13593 / LMG 18877 / RB2256) (Sphingomonas alaskensis)).